The sequence spans 223 residues: DNA mismatch repair protein MutH (223 aa).

The protein belongs to the MutH family.

Its subcellular location is the cytoplasm. Its function is as follows. Sequence-specific endonuclease that cleaves unmethylated GATC sequences. It is involved in DNA mismatch repair. This is DNA mismatch repair protein MutH from Shewanella sp. (strain MR-7).